The chain runs to 138 residues: Cysteine desulfuration protein SufE (138 aa).

Cys-51 (cysteine persulfide intermediate) is an active-site residue.

It belongs to the SufE family. Homodimer. Interacts with SufS.

The protein resides in the cytoplasm. It participates in cofactor biosynthesis; iron-sulfur cluster biosynthesis. In terms of biological role, participates in cysteine desulfuration mediated by SufS. Cysteine desulfuration mobilizes sulfur from L-cysteine to yield L-alanine and constitutes an essential step in sulfur metabolism for biosynthesis of a variety of sulfur-containing biomolecules. Functions as a sulfur acceptor for SufS, by mediating the direct transfer of the sulfur atom from the S-sulfanylcysteine of SufS, an intermediate product of cysteine desulfuration process. The polypeptide is Cysteine desulfuration protein SufE (Shigella sonnei (strain Ss046)).